The sequence spans 57 residues: Somatostatin-2 (57 aa).

The segment at Gly-1–Arg-26 is disordered.

It belongs to the somatostatin family.

Its subcellular location is the secreted. In terms of biological role, somatostatin inhibits the release of somatotropin. The protein is Somatostatin-2 (sst2) of Piaractus mesopotamicus (Small-scaled pacu).